Consider the following 412-residue polypeptide: Serine hydroxymethyltransferase (412 aa).

(6S)-5,6,7,8-tetrahydrofolate is bound by residues L116 and G120–L122. K225 bears the N6-(pyridoxal phosphate)lysine mark. (6S)-5,6,7,8-tetrahydrofolate contacts are provided by residues E241 and S350–F352.

The protein belongs to the SHMT family. Homodimer. It depends on pyridoxal 5'-phosphate as a cofactor.

It is found in the cytoplasm. It catalyses the reaction (6R)-5,10-methylene-5,6,7,8-tetrahydrofolate + glycine + H2O = (6S)-5,6,7,8-tetrahydrofolate + L-serine. The protein operates within one-carbon metabolism; tetrahydrofolate interconversion. It functions in the pathway amino-acid biosynthesis; glycine biosynthesis; glycine from L-serine: step 1/1. Its function is as follows. Catalyzes the reversible interconversion of serine and glycine with tetrahydrofolate (THF) serving as the one-carbon carrier. This reaction serves as the major source of one-carbon groups required for the biosynthesis of purines, thymidylate, methionine, and other important biomolecules. Also exhibits THF-independent aldolase activity toward beta-hydroxyamino acids, producing glycine and aldehydes, via a retro-aldol mechanism. This Enterococcus faecalis (strain ATCC 700802 / V583) protein is Serine hydroxymethyltransferase.